Reading from the N-terminus, the 32-residue chain is Delta-conotoxin EVIA (32 aa).

3 cysteine pairs are disulfide-bonded: Cys3-Cys21, Cys10-Cys25, and Cys20-Cys29. Pro6 carries the 4-hydroxyproline modification. Leu32 is subject to Leucine amide.

This sequence belongs to the conotoxin O1 superfamily. In terms of tissue distribution, expressed by the venom duct.

It localises to the secreted. Delta-conotoxins bind to site 6 of voltage-gated sodium channels and inhibit the inactivation process. This toxin inhibits sodium channel inactivation in neuronal membranes from amphibians and mammals (Nav1.2a/SCN1A, Nav1.3/SCN3A and Nav1.6/SCN8A) upon binding to receptor site 6. The polypeptide is Delta-conotoxin EVIA (Conus ermineus (Agate cone)).